The chain runs to 204 residues: Large ribosomal subunit protein mL67 (204 aa).

Belongs to the mitochondrion-specific ribosomal protein mL67 family.

The protein localises to the nucleus. The protein resides in the mitochondrion. Functionally, transcription factor involved in regulation of RNA polymerase II-dependent transcription. Also involved in regulation of mitochondrial DNA recombination, maintenance and repair, and generation of homoplasmic cells. The sequence is that of Large ribosomal subunit protein mL67 (MHR1) from Yarrowia lipolytica (strain CLIB 122 / E 150) (Yeast).